The primary structure comprises 906 residues: Protein translocase subunit SecA (906 aa).

Residues Gln86, 104-108 (GEGKT), and Asp511 each bind ATP. Composition is skewed to basic and acidic residues over residues 853-865 (HESVIDNNQRHDE) and 877-888 (VRREGPKVKRND). The segment at 853–906 (HESVIDNNQRHDEDEQEEAPKVQQVRREGPKVKRNDPCPCGSGKKYKQCHSKVE) is disordered. Zn(2+) is bound by residues Cys890, Cys892, Cys901, and His902. Residues 896–906 (KKYKQCHSKVE) are compositionally biased toward basic residues.

The protein belongs to the SecA family. Monomer and homodimer. Part of the essential Sec protein translocation apparatus which comprises SecA, SecYEG and auxiliary proteins SecDF-YajC and YidC. The cofactor is Zn(2+).

It is found in the cell inner membrane. It localises to the cytoplasm. It carries out the reaction ATP + H2O + cellular proteinSide 1 = ADP + phosphate + cellular proteinSide 2.. In terms of biological role, part of the Sec protein translocase complex. Interacts with the SecYEG preprotein conducting channel. Has a central role in coupling the hydrolysis of ATP to the transfer of proteins into and across the cell membrane, serving both as a receptor for the preprotein-SecB complex and as an ATP-driven molecular motor driving the stepwise translocation of polypeptide chains across the membrane. This chain is Protein translocase subunit SecA, found in Francisella tularensis subsp. tularensis (strain WY96-3418).